A 544-amino-acid chain; its full sequence is Fructose dehydrogenase large subunit (544 aa).

14–30 contacts FAD; sequence GAGICGSLLAHKLVRNG. Residue histidine 478 is the Proton acceptor of the active site.

The protein belongs to the GMC oxidoreductase family. Heterotrimer composed of FdhL, FdhS and FdhC. The cofactor is FAD.

It localises to the cell membrane. The catalysed reaction is keto-D-fructose + a ubiquinone = 5-dehydro-D-fructose + a ubiquinol. In terms of biological role, catalytic subunit of fructose dehydrogenase, an enzyme that catalyzes the oxidation of D-fructose to produce 5-keto-D-fructose. The sequence is that of Fructose dehydrogenase large subunit (fdhL) from Gluconobacter japonicus.